Here is a 251-residue protein sequence, read N- to C-terminus: Imidazole glycerol phosphate synthase subunit HisF (251 aa).

Residues Asp-11 and Asp-130 contribute to the active site.

The protein belongs to the HisA/HisF family. In terms of assembly, heterodimer of HisH and HisF.

The protein resides in the cytoplasm. It carries out the reaction 5-[(5-phospho-1-deoxy-D-ribulos-1-ylimino)methylamino]-1-(5-phospho-beta-D-ribosyl)imidazole-4-carboxamide + L-glutamine = D-erythro-1-(imidazol-4-yl)glycerol 3-phosphate + 5-amino-1-(5-phospho-beta-D-ribosyl)imidazole-4-carboxamide + L-glutamate + H(+). Its pathway is amino-acid biosynthesis; L-histidine biosynthesis; L-histidine from 5-phospho-alpha-D-ribose 1-diphosphate: step 5/9. IGPS catalyzes the conversion of PRFAR and glutamine to IGP, AICAR and glutamate. The HisF subunit catalyzes the cyclization activity that produces IGP and AICAR from PRFAR using the ammonia provided by the HisH subunit. This Chlorobium phaeobacteroides (strain DSM 266 / SMG 266 / 2430) protein is Imidazole glycerol phosphate synthase subunit HisF.